The following is a 335-amino-acid chain: Nucleoid-associated protein Pput_1012 (335 aa).

It belongs to the YejK family.

The protein resides in the cytoplasm. It is found in the nucleoid. This chain is Nucleoid-associated protein Pput_1012, found in Pseudomonas putida (strain ATCC 700007 / DSM 6899 / JCM 31910 / BCRC 17059 / LMG 24140 / F1).